Reading from the N-terminus, the 200-residue chain is MRPLSVQGAWLSETRAFADDRGEFQELYSARSLRGALGYDPGVAQVNRSVSRRGVLRGVHFAQLPPSQAKYVTCLSGAVLDVVVDIRTGSPTYRAWEAVRLDDPHRSLYVEAGLGHSFMALTDDAVVVYLTSQGYAAGREHGVHPLDPDLGIAWPDGIEPVLSEKDRQAPGIAEMERRGLLPDYEECLAFRRSLCERGTG.

Residues Arg-21, Glu-26, 45-47 (QVN), and Arg-57 each bind substrate. His-60 functions as the Proton acceptor in the catalytic mechanism. Lys-70 and His-116 together coordinate substrate. Tyr-129 (proton donor) is an active-site residue. Substrate is bound by residues Glu-140 and Lys-165.

It belongs to the dTDP-4-dehydrorhamnose 3,5-epimerase family.

The catalysed reaction is dTDP-4-dehydro-6-deoxy-alpha-D-glucose = dTDP-4-dehydro-beta-L-rhamnose. Its pathway is carbohydrate biosynthesis; dTDP-L-rhamnose biosynthesis. It functions in the pathway antibiotic biosynthesis; streptomycin biosynthesis. In terms of biological role, involved in the biosynthesis of the dihydrostreptose moiety of streptomycin. Catalyzes the epimerization of the C3' and C5'positions of dTDP-6-deoxy-D-xylo-4-hexulose, forming dTDP-6-deoxy-L-lyxo-4-hexulose. This chain is dTDP-4-dehydrorhamnose 3,5-epimerase, found in Streptomyces griseus.